An 87-amino-acid polypeptide reads, in one-letter code: UPF0367 protein Syncc9902_0316 (87 aa).

It belongs to the UPF0367 family.

The protein is UPF0367 protein Syncc9902_0316 of Synechococcus sp. (strain CC9902).